The following is a 292-amino-acid chain: 33 kDa chaperonin (292 aa).

Disulfide bonds link C230-C232 and C263-C266.

It belongs to the HSP33 family. In terms of processing, under oxidizing conditions two disulfide bonds are formed involving the reactive cysteines. Under reducing conditions zinc is bound to the reactive cysteines and the protein is inactive.

The protein localises to the cytoplasm. Functionally, redox regulated molecular chaperone. Protects both thermally unfolding and oxidatively damaged proteins from irreversible aggregation. Plays an important role in the bacterial defense system toward oxidative stress. The polypeptide is 33 kDa chaperonin (Salmonella choleraesuis (strain SC-B67)).